A 103-amino-acid polypeptide reads, in one-letter code: Cyclotide vibi-I (103 aa).

Residues 1–9 (AAFALPAFA) form the signal peptide. A propeptide spanning residues 10–69 (SFEKDVITPAALEAVLNRKAPLSNIMMENDAILNVIANVKTVISNPVLEEALLKTNHGVN) is cleaved from the precursor. Residues 70–99 (GIPCGESCVWIPCLTSTVGCSCKSKVCYRN) constitute a cross-link (cyclopeptide (Gly-Asn)). Cystine bridges form between C73–C89, C77–C91, and C82–C96. Positions 100-103 (SLDN) are excised as a propeptide.

This is a cyclic peptide.

Probably participates in a plant defense mechanism. The sequence is that of Cyclotide vibi-I from Viola biflora (Yellow wood violet).